Consider the following 149-residue polypeptide: Ribonuclease pancreatic (149 aa).

An N-terminal signal peptide occupies residues 1–25 (MGLENSLILFSLLVLVLGWVQPSLG). The disordered stretch occupies residues 25–62 (GKESSPDKFKRQHMDTEGSSKSSPTYCNQMRSPQEMTK). Basic and acidic residues predominate over residues 28–42 (SSPDKFKRQHMDTEG). Substrate-binding residues include Lys32 and Arg35. Catalysis depends on His37, which acts as the Proton acceptor. Residues 43-61 (SSKSSPTYCNQMRSPQEMT) show a composition bias toward polar residues. Intrachain disulfides connect Cys51/Cys109, Cys65/Cys120, Cys83/Cys135, and Cys90/Cys97. Residues 66–70 (KPVNT) and Lys91 each bind substrate. His144 (proton donor) is an active-site residue.

Belongs to the pancreatic ribonuclease family. Monomer. Interacts with and forms tight 1:1 complexes with RNH1. Dimerization of two such complexes may occur. Interaction with RNH1 inhibits this protein.

It localises to the secreted. The enzyme catalyses an [RNA] containing cytidine + H2O = an [RNA]-3'-cytidine-3'-phosphate + a 5'-hydroxy-ribonucleotide-3'-[RNA].. It carries out the reaction an [RNA] containing uridine + H2O = an [RNA]-3'-uridine-3'-phosphate + a 5'-hydroxy-ribonucleotide-3'-[RNA].. Its function is as follows. Endonuclease that catalyzes the cleavage of RNA on the 3' side of pyrimidine nucleotides. Acts on single-stranded and double-stranded RNA. The protein is Ribonuclease pancreatic (RNASE1) of Sundamys muelleri (Mueller's giant sunda rat).